The primary structure comprises 311 residues: Formimidoylglutamase (311 aa).

6 residues coordinate Mn(2+): His122, Asp151, His153, Asp155, Cys242, and Asp244.

Belongs to the arginase family. It depends on Mn(2+) as a cofactor.

It carries out the reaction N-formimidoyl-L-glutamate + H2O = formamide + L-glutamate. It functions in the pathway amino-acid degradation; L-histidine degradation into L-glutamate; L-glutamate from N-formimidoyl-L-glutamate (hydrolase route): step 1/1. Catalyzes the conversion of N-formimidoyl-L-glutamate to L-glutamate and formamide. This Pseudomonas aeruginosa (strain UCBPP-PA14) protein is Formimidoylglutamase.